Here is a 261-residue protein sequence, read N- to C-terminus: Protein-ADP-ribose hydrolase (261 aa).

Residues 74-261 enclose the Macro domain; it reads ADLKPVTGRG…DEALYNKLMS (188 aa). D93, I94, and N107 together coordinate ADP-D-ribose. The Zn(2+) site is built by C113, H118, and C120. Positions 120, 121, 122, 211, 212, 213, and 215 each coordinate ADP-D-ribose.

This sequence belongs to the MacroD-type family. Zn-Macro subfamily. Zn(2+) serves as cofactor.

It carries out the reaction 4-O-(ADP-D-ribosyl)-L-aspartyl-[protein] + H2O = L-aspartyl-[protein] + ADP-D-ribose + H(+). Functionally, ADP-ribosylhydrolase that specifically reverses the SirTM-mediated mono-ADP-ribosylation at an asparatate residue of GcvH-L, by releasing ADP-ribose from the target protein. May play a role in the regulation of the response to host-induced oxidative stress. The polypeptide is Protein-ADP-ribose hydrolase (Treponema medium).